Consider the following 299-residue polypeptide: Taste receptor type 2 member 50 (299 aa).

Residue methionine 1 is a topological domain, extracellular. The chain crosses the membrane as a helical span at residues 2–22 (IPFLHIFFSVLILVLFVLGNF). At 23 to 55 (ANGFIALVNFIDWVKRKKISLADQILTALAVSR) the chain is on the cytoplasmic side. Residues 56 to 76 (VGLLWALLLNWYLTELNPAFY) form a helical membrane-spanning segment. Residues 77-87 (SVELRITSYNA) lie on the Extracellular side of the membrane. Residues 88 to 108 (WVVTNHFSMWLAASLSIFYLL) traverse the membrane as a helical segment. Residues 109 to 126 (KIANFSNLSFLNLKRRVR) are Cytoplasmic-facing. A helical transmembrane segment spans residues 127-147 (SIILVILLGSLLFLVCHLLAV). Residues 148 to 181 (NMDENMWTEEYEGNMTGKMKLRNAAHLSYMTVTT) are Extracellular-facing. An N-linked (GlcNAc...) asparagine glycan is attached at asparagine 161. A helical transmembrane segment spans residues 182–202 (LWSFIPFMLSLISFLMLIFSL). Residues 203–229 (CKHLKKMQLHGEGSRDPSTTVHIKALQ) are Cytoplasmic-facing. The helical transmembrane segment at 230-250 (TLISFLLLCAIFFLFLIISVW) threads the bilayer. The Extracellular segment spans residues 251-259 (SPRRLQNEP). A helical membrane pass occupies residues 260-280 (VFMVCKAVGNIYLSFDSFVLI). Residues 281 to 299 (WRTKKLKHIFLLILCQIRC) are Cytoplasmic-facing.

The protein belongs to the G-protein coupled receptor T2R family.

It is found in the membrane. Its function is as follows. Receptor that may play a role in the perception of bitterness and is gustducin-linked. May play a role in sensing the chemical composition of the gastrointestinal content. The activity of this receptor may stimulate alpha gustducin, mediate PLC-beta-2 activation and lead to the gating of TRPM5. The polypeptide is Taste receptor type 2 member 50 (TAS2R50) (Macaca mulatta (Rhesus macaque)).